Reading from the N-terminus, the 408-residue chain is MKDQYDLVVVGAGPAGSIAATTAAKKGLSVLMLEKRQEIGEPVRCAEGVGKKRLRQHIELDEKWLCGEVSSAKIISPNGTTLTMAEEDAGSEVGYVLDRKIFDRTLVELSGEAGVDIMVKARVTGLIIEENTVCGVEMMHLGKTYSIRSKLVIGADGVESKVGRWAGIDTSLKPSHIETCAQFLVSGVDIDQSSCYFYMGNKVAPGGYVWVFPKGNNMANVGIGILGSRAGEKKPIEYLTDFVEANYPNGSIIEQVAGAVPASGPIEKTIANGLMLVGDAARQSDPFTGGGISNAMDAGLYAGEVAAEAIAQDDVSEKILQKYEKRWRGSFGNEIANNLIVKETFFSLSDEDLDSLALSIKDVDFKKMDLIDFIAALFKANKKLLWNLRPLFTQKLKQKFSGLTKFKR.

10 residues coordinate FAD: Ala-15, Glu-34, Cys-45, Ala-46, Gly-48, Arg-99, Val-123, Asp-279, Gly-291, and Ile-292.

Belongs to the geranylgeranyl reductase family. DGGGPL reductase subfamily. The cofactor is FAD.

The enzyme catalyses a 2,3-bis-O-phytanyl-sn-glycerol 1-phospholipid + 8 oxidized 2[4Fe-4S]-[ferredoxin] = a 2,3-bis-O-(geranylgeranyl)-sn-glycerol 1-phospholipid + 8 reduced 2[4Fe-4S]-[ferredoxin] + 16 H(+). It carries out the reaction 2,3-bis-O-(phytanyl)-sn-glycerol 1-phosphate + 8 oxidized 2[4Fe-4S]-[ferredoxin] = 2,3-bis-O-(geranylgeranyl)-sn-glycerol 1-phosphate + 8 reduced 2[4Fe-4S]-[ferredoxin] + 16 H(+). The catalysed reaction is a 2,3-bis-O-phytanyl-sn-glycerol 1-phospholipid + 8 A = a 2,3-bis-O-(geranylgeranyl)-sn-glycerol 1-phospholipid + 8 AH2. It catalyses the reaction CDP-2,3-bis-O-(geranylgeranyl)-sn-glycerol + 8 AH2 = CDP-2,3-bis-O-(phytanyl)-sn-glycerol + 8 A. The enzyme catalyses archaetidylserine + 8 AH2 = 2,3-bis-O-phytanyl-sn-glycero-3-phospho-L-serine + 8 A. The protein operates within membrane lipid metabolism; glycerophospholipid metabolism. Functionally, is involved in the reduction of 2,3-digeranylgeranylglycerophospholipids (unsaturated archaeols) into 2,3-diphytanylglycerophospholipids (saturated archaeols) in the biosynthesis of archaeal membrane lipids. Catalyzes the formation of archaetidic acid (2,3-di-O-phytanyl-sn-glyceryl phosphate) from 2,3-di-O-geranylgeranylglyceryl phosphate (DGGGP) via the hydrogenation of each double bond of the isoprenoid chains. Is also probably able to reduce double bonds of geranyl groups in CDP-2,3-bis-O-(geranylgeranyl)-sn-glycerol and archaetidylserine, thus acting at various stages in the biosynthesis of archaeal membrane lipids. This is Digeranylgeranylglycerophospholipid reductase 1 from Methanococcoides burtonii (strain DSM 6242 / NBRC 107633 / OCM 468 / ACE-M).